A 341-amino-acid polypeptide reads, in one-letter code: Dihydroorotate dehydrogenase (quinone) (341 aa).

FMN is bound by residues 61 to 65 (AGLDK) and Thr-85. Residue Lys-65 participates in substrate binding. 110-114 (NRMGF) provides a ligand contact to substrate. FMN is bound by residues Asn-138 and Asn-171. Residue Asn-171 coordinates substrate. Ser-174 serves as the catalytic Nucleophile. Position 176 (Asn-176) interacts with substrate. FMN contacts are provided by Lys-216 and Thr-244. Position 245–246 (245–246 (NT)) interacts with substrate. FMN contacts are provided by residues Gly-267, Gly-296, and 317–318 (YS).

This sequence belongs to the dihydroorotate dehydrogenase family. Type 2 subfamily. In terms of assembly, monomer. FMN is required as a cofactor.

The protein localises to the cell membrane. The enzyme catalyses (S)-dihydroorotate + a quinone = orotate + a quinol. It functions in the pathway pyrimidine metabolism; UMP biosynthesis via de novo pathway; orotate from (S)-dihydroorotate (quinone route): step 1/1. Functionally, catalyzes the conversion of dihydroorotate to orotate with quinone as electron acceptor. This chain is Dihydroorotate dehydrogenase (quinone), found in Pseudomonas fluorescens (strain SBW25).